The chain runs to 64 residues: MPKIKTHRGAAKRFKKTATGKIRGWHAFHSHILGKKTAKRKRNLRKSTIIHESDAVRISRLLPY.

The protein belongs to the bacterial ribosomal protein bL35 family.

The chain is Large ribosomal subunit protein bL35 from Desulforamulus reducens (strain ATCC BAA-1160 / DSM 100696 / MI-1) (Desulfotomaculum reducens).